We begin with the raw amino-acid sequence, 372 residues long: Glutamate 5-kinase (372 aa).

Residue K6 participates in ATP binding. Positions 46, 133, and 145 each coordinate substrate. ATP contacts are provided by residues 165 to 166 and 207 to 213; these read TD and TGGMYTK. Residues 272–350 form the PUA domain; sequence NGFLFVDEGA…HDIESILGYK (79 aa).

It belongs to the glutamate 5-kinase family.

The protein resides in the cytoplasm. It carries out the reaction L-glutamate + ATP = L-glutamyl 5-phosphate + ADP. It functions in the pathway amino-acid biosynthesis; L-proline biosynthesis; L-glutamate 5-semialdehyde from L-glutamate: step 1/2. Its function is as follows. Catalyzes the transfer of a phosphate group to glutamate to form L-glutamate 5-phosphate. This chain is Glutamate 5-kinase, found in Caldanaerobacter subterraneus subsp. tengcongensis (strain DSM 15242 / JCM 11007 / NBRC 100824 / MB4) (Thermoanaerobacter tengcongensis).